Consider the following 140-residue polypeptide: Nucleoside diphosphate kinase (140 aa).

The ATP site is built by lysine 11, phenylalanine 59, arginine 87, threonine 93, arginine 104, and asparagine 114. The Pros-phosphohistidine intermediate role is filled by histidine 117.

Belongs to the NDK family. As to quaternary structure, homotetramer. Requires Mg(2+) as cofactor.

It is found in the cytoplasm. The catalysed reaction is a 2'-deoxyribonucleoside 5'-diphosphate + ATP = a 2'-deoxyribonucleoside 5'-triphosphate + ADP. It carries out the reaction a ribonucleoside 5'-diphosphate + ATP = a ribonucleoside 5'-triphosphate + ADP. In terms of biological role, major role in the synthesis of nucleoside triphosphates other than ATP. The ATP gamma phosphate is transferred to the NDP beta phosphate via a ping-pong mechanism, using a phosphorylated active-site intermediate. The protein is Nucleoside diphosphate kinase of Bradyrhizobium sp. (strain BTAi1 / ATCC BAA-1182).